A 591-amino-acid polypeptide reads, in one-letter code: Protein NRT1/ PTR FAMILY 1.1 (591 aa).

The next 11 helical transmembrane spans lie at 68–88 (TVLFMWVAATNFMPLVGAFLS), 98–118 (IVIASLSSLLGMVVLWLTAML), 139–159 (SSQLALLYTAFALISIGSGGI), 186–206 (FFGWYYASSSVAVLIAFTVIV), 216–236 (IGFGIPAILMLLAGFLFVFAS), 329–349 (LKALVKVIPVWSTGIMMSINV), 374–394 (IPAGSFGMFTIIALISWVVLY), 418–438 (MGLGLFISFLAMAVSATVEHY), 460–480 (AMWLVPQYVLHGLAEALTGIG), 496–516 (IAASLFGLGMAVANILASVIL), and 543–563 (YYWVLAILSFVNVIYYVVCSW).

Belongs to the major facilitator superfamily. Proton-dependent oligopeptide transporter (POT/PTR) (TC 2.A.17) family. Expressed in siliques, shoots and roots. Mainly detected in larger expanded leaves, in the companion cells of major veins.

It localises to the cell membrane. Low-affinity nitrate transporter involved in xylem-to-phloem transfer for redistributing nitrate into developing leaves. Not involved in dipeptides transport. The sequence is that of Protein NRT1/ PTR FAMILY 1.1 (NPF1.1) from Arabidopsis thaliana (Mouse-ear cress).